A 770-amino-acid polypeptide reads, in one-letter code: Protein PAT1 homolog 1 (770 aa).

Residues 1–26 form a disordered region; sequence MFRYESLEDCPLDEDEDAFQGLGEED. Residues 1–84 are region A; interaction with DDX6/RCK; it reads MFRYESLEDC…EMDLLGDHEE (84 aa). Residues 1–397 are involved in nuclear foci localization; the sequence is MFRYESLEDC…HRSSHQDHLR (397 aa). Residues 7 to 26 are compositionally biased toward acidic residues; it reads LEDCPLDEDEDAFQGLGEED. Residues 85-388 are region N; interaction with decapping machinery; that stretch reads NLAERLSKMV…LNGAGDRGSH (304 aa). A Nuclear export signal motif is present at residues 86-95; it reads LAERLSKMVI. S177 is modified (phosphoserine). The residue at position 178 (T178) is a Phosphothreonine. A phosphoserine mark is found at S179 and S184. T194 is modified (phosphothreonine). Asymmetric dimethylarginine occurs at positions 217, 223, and 263. Residues 223–397 form an involved in RNA-binding region; that stretch reads RYPAPYGERM…HRSSHQDHLR (175 aa). S278 is subject to Phosphoserine. R284 carries the post-translational modification Asymmetric dimethylarginine. 2 disordered regions span residues 315–344 and 360–400; these read FRAF…QNLR and QHRR…RKDP. A compositionally biased stretch (pro residues) spans 324-337; the sequence is SATPPPQQHPPGPG. Over residues 367-380 the composition is skewed to low complexity; the sequence is QRQQQNRNQHRNLN. The residue at position 385 (R385) is an Omega-N-methylarginine. The segment covering 385–400 has biased composition (basic and acidic residues); it reads RGSHRSSHQDHLRKDP. The region H stretch occupies residues 389–448; the sequence is RSSHQDHLRKDPYANLMLQREKDWVSKIQMMQLQSTDPYLDDFYYQNYFEKLEKLSAAEE. Residues 398-770 are involved in nuclear speckle localization; that stretch reads KDPYANLMLQ…TKLQLVQGIR (373 aa). The interval 449 to 770 is region C; that stretch reads IQGDGPKKER…TKLQLVQGIR (322 aa).

The protein belongs to the PAT1 family. In terms of assembly, interacts (via region A) with DDX6/RCK. Interacts (via region H and region C) with LSM1 and LSM4. Interacts (via region N) with DCP1A, DCP2, EDC3, EDC4 and XRN1. Interacts with the CCR4-NOT complex. Interacts with the Lsm-containing SMN-Sm protein complex. Interacts with EIF4ENIF1/4E-T.

Its subcellular location is the cytoplasm. The protein resides in the P-body. It localises to the nucleus. It is found in the PML body. The protein localises to the nucleus speckle. In terms of biological role, RNA-binding protein involved in deadenylation-dependent decapping of mRNAs, leading to the degradation of mRNAs. Acts as a scaffold protein that connects deadenylation and decapping machinery. Required for cytoplasmic mRNA processing body (P-body) assembly. In Pongo abelii (Sumatran orangutan), this protein is Protein PAT1 homolog 1 (PATL1).